The following is a 73-amino-acid chain: Kappa-scoloptoxin(03)-Ssm1c (73 aa).

A signal peptide spans 1 to 23 (MKSWMAILLVMALIIFTLDNCYS). Cystine bridges form between C32/C58, C41/C57, and C44/C67.

It belongs to the scoloptoxin family. Expressed by the venom gland.

It localises to the secreted. Functionally, inhibits voltage-gated potassium channels. The chain is Kappa-scoloptoxin(03)-Ssm1c from Scolopendra mutilans (Chinese red-headed centipede).